The following is a 150-amino-acid chain: Multiprotein-bridging factor 1 (150 aa).

Positions 32 to 59 (LNAARRSGNVVGTEKKYGSTNTKSNPEG) are disordered. Polar residues predominate over residues 49–58 (GSTNTKSNPE). The HTH cro/C1-type domain maps to 85 to 139 (IQQARQEKKLTQKDLATKINEKPNVINDYEAGRAVPNQQLLGKLERALGVKLRGK). The segment at residues 96 to 115 (QKDLATKINEKPNVINDYEA) is a DNA-binding region (H-T-H motif).

It belongs to the MBF1 family.

Its function is as follows. Transcriptional coactivator that stimulates GCN4-dependent transcriptional activity by bridging the DNA-binding region of GCN4 and TBP (SPT15), thereby recruiting TBP to GCN4-bound promoters. Involved in induction of the ribosome quality control (RQC) pathway; a pathway that degrades nascent peptide chains during problematic translation. Required to prevent stalled ribosomes from frameshifting. The polypeptide is Multiprotein-bridging factor 1 (MBF1) (Debaryomyces hansenii (strain ATCC 36239 / CBS 767 / BCRC 21394 / JCM 1990 / NBRC 0083 / IGC 2968) (Yeast)).